The primary structure comprises 357 residues: Alanine racemase (357 aa).

Lys-33 (proton acceptor; specific for D-alanine) is an active-site residue. N6-(pyridoxal phosphate)lysine is present on Lys-33. Residue Arg-130 coordinates substrate. Tyr-252 functions as the Proton acceptor; specific for L-alanine in the catalytic mechanism. Met-300 lines the substrate pocket.

Belongs to the alanine racemase family. The cofactor is pyridoxal 5'-phosphate.

The catalysed reaction is L-alanine = D-alanine. It participates in amino-acid biosynthesis; D-alanine biosynthesis; D-alanine from L-alanine: step 1/1. Catalyzes the interconversion of L-alanine and D-alanine. May also act on other amino acids. The chain is Alanine racemase (alr) from Acidiphilium cryptum (strain JF-5).